The primary structure comprises 107 residues: MLITTTPSIEGKQIIEYKEVVFGEVVAGSNFIRDFFAGITDIIGGRSGAYESKIARARKEALEELQQQAKRLGANAVVGVEVNYTSINGEGKSMFMIVASGTAVVVR.

It belongs to the UPF0145 family.

The protein is UPF0145 protein PM1668 of Pasteurella multocida (strain Pm70).